The sequence spans 249 residues: Probable transcriptional regulatory protein ACIAD2052 (249 aa).

It belongs to the TACO1 family.

It is found in the cytoplasm. This is Probable transcriptional regulatory protein ACIAD2052 from Acinetobacter baylyi (strain ATCC 33305 / BD413 / ADP1).